Here is a 240-residue protein sequence, read N- to C-terminus: UDP-2,3-diacylglucosamine hydrolase (240 aa).

Positions 7, 9, 40, 78, and 113 each coordinate Mn(2+). 78–79 is a substrate binding site; the sequence is NR. 4 residues coordinate substrate: D121, S159, K166, and H194. The Mn(2+) site is built by H194 and H196.

It belongs to the LpxH family. Requires Mn(2+) as cofactor.

It is found in the cell inner membrane. The catalysed reaction is UDP-2-N,3-O-bis[(3R)-3-hydroxytetradecanoyl]-alpha-D-glucosamine + H2O = 2-N,3-O-bis[(3R)-3-hydroxytetradecanoyl]-alpha-D-glucosaminyl 1-phosphate + UMP + 2 H(+). The protein operates within glycolipid biosynthesis; lipid IV(A) biosynthesis; lipid IV(A) from (3R)-3-hydroxytetradecanoyl-[acyl-carrier-protein] and UDP-N-acetyl-alpha-D-glucosamine: step 4/6. Functionally, hydrolyzes the pyrophosphate bond of UDP-2,3-diacylglucosamine to yield 2,3-diacylglucosamine 1-phosphate (lipid X) and UMP by catalyzing the attack of water at the alpha-P atom. Involved in the biosynthesis of lipid A, a phosphorylated glycolipid that anchors the lipopolysaccharide to the outer membrane of the cell. The protein is UDP-2,3-diacylglucosamine hydrolase of Pseudomonas putida (strain ATCC 47054 / DSM 6125 / CFBP 8728 / NCIMB 11950 / KT2440).